The following is a 343-amino-acid chain: Polyprenyl transferase spyF (343 aa).

The next 8 helical transmembrane spans lie at 38-58, 62-82, 92-112, 138-158, 170-190, 241-261, 273-293, and 311-331; these read WLAVFSGGVSLPILIGNSHPL, VSVWATLLAGANQIATHPASI, LLCLICGYIFCGAGMVWNDWI, GFIWMMVHVAAMIPVTISTIL, LYIYPQYFLGFSLAWPGAIGW, AYVAAGSRIHMFLVILAGLVL, SGWLWASWMCVWALSFVHQLL, and FALGVWTIVACAAELGLSSGM.

This sequence belongs to the UbiA prenyltransferase family. The cofactor is Mg(2+).

Its subcellular location is the membrane. The catalysed reaction is triacetate lactone + (2E,6E,10E)-geranylgeranyl diphosphate = (2E,6E,10E)-geranylgeranyl-triacetate lactone + diphosphate. Its pathway is secondary metabolite biosynthesis; terpenoid biosynthesis. Its function is as follows. Polyprenyl transferase; part of the gene cluster that mediates the biosynthesis of meroterpenoids called sartorypyrones. Within the pathway, spyF catalyzes the prenylation of triacetic acid lactone (TAL) to produce geranylgeranyl-triacetate lactone. The biosynthesis of sartorypyrones begins with the production of triacetic acid lactone (TAL) by the NR-PKS spyA using one molecule of acetyl-CoA and two molecules of malonyl-CoA. The prenyltransferase spyF then conjugates geranylgeranyl pyrophosphate (GGPP) to TAL to form geranylgeranyl-triacetate lactone, for which the pathway-specific geranylgeranyl pyrophosphate synthase (GGPS) spyE is required to provide GGPP. Subsequently, geranylgeranyl-triacetate lactone is epoxidized at the terminal olein by the FAD-dependent monooxygenase spyC, followed by cyclization of the terpenoid component catalyzed by the terpene cyclase spyD to produce both the bicyclic sartorypyrone F and the monocyclic sartorypyrone D. Finally, the last step of the biosynthesis involves the acetylation of the meroterpenoids sartorypyrones D and F by the acetyltransferase SpyB to produce sartorypyrones A and G, respectively. In Aspergillus fumigatus (strain ATCC MYA-4609 / CBS 101355 / FGSC A1100 / Af293) (Neosartorya fumigata), this protein is Polyprenyl transferase spyF.